We begin with the raw amino-acid sequence, 162 residues long: Phosphopantetheine adenylyltransferase (162 aa).

Position 11 (S11) interacts with substrate. ATP-binding positions include 11–12 (SF) and H19. Substrate contacts are provided by K43, V76, and R90. Residues 91–93 (GLR), E101, and 126–132 (HLYISSS) contribute to the ATP site.

It belongs to the bacterial CoaD family. Homohexamer. Mg(2+) serves as cofactor.

The protein resides in the cytoplasm. It carries out the reaction (R)-4'-phosphopantetheine + ATP + H(+) = 3'-dephospho-CoA + diphosphate. Its pathway is cofactor biosynthesis; coenzyme A biosynthesis; CoA from (R)-pantothenate: step 4/5. Its activity is regulated as follows. Is inhibited by a series of cycloalkyl pyrimidines, which also show suppression of bacterial growth. Reversibly transfers an adenylyl group from ATP to 4'-phosphopantetheine, yielding dephospho-CoA (dPCoA) and pyrophosphate. The protein is Phosphopantetheine adenylyltransferase of Streptococcus pneumoniae (strain ATCC BAA-255 / R6).